Here is a 503-residue protein sequence, read N- to C-terminus: Lysine--tRNA ligase (503 aa).

The Mg(2+) site is built by Glu-413 and Glu-420.

It belongs to the class-II aminoacyl-tRNA synthetase family. As to quaternary structure, homodimer. It depends on Mg(2+) as a cofactor.

The protein localises to the cytoplasm. It carries out the reaction tRNA(Lys) + L-lysine + ATP = L-lysyl-tRNA(Lys) + AMP + diphosphate. This chain is Lysine--tRNA ligase, found in Actinobacillus succinogenes (strain ATCC 55618 / DSM 22257 / CCUG 43843 / 130Z).